The sequence spans 842 residues: Non-motile and phage-resistance protein (842 aa).

Transmembrane regions (helical) follow at residues 29–50 (VFVRIAILAALLLLAVYTAFGV), 283–303 (GAFSLLVPLGVGIALALLLMI), and 343–363 (VYLSDVTGAMFGWGGGGVVSG). The region spanning 318–389 (SERRFRLAVE…QALANAAMYG (72 aa)) is the PAS domain. Positions 607-830 (NMSHELRTPL…TVSFTLPVRH (224 aa)) constitute a Histidine kinase domain. The residue at position 610 (H610) is a Phosphohistidine; by autocatalysis.

The protein resides in the cell membrane. It catalyses the reaction ATP + protein L-histidine = ADP + protein N-phospho-L-histidine.. In terms of biological role, member of the two-component regulatory system involved in the regulation of polar organelle development. PleC functions as a membrane-associated protein kinase that transfers phosphate to the response regulator PleD, leading to its activation. The chain is Non-motile and phage-resistance protein (pleC) from Caulobacter vibrioides (strain ATCC 19089 / CIP 103742 / CB 15) (Caulobacter crescentus).